A 1263-amino-acid chain; its full sequence is DNA-directed RNA polymerase subunit beta (1263 aa).

It belongs to the RNA polymerase beta chain family. The RNAP catalytic core consists of 2 alpha, 1 beta, 1 beta' and 1 omega subunit. When a sigma factor is associated with the core the holoenzyme is formed, which can initiate transcription.

The catalysed reaction is RNA(n) + a ribonucleoside 5'-triphosphate = RNA(n+1) + diphosphate. Its function is as follows. DNA-dependent RNA polymerase catalyzes the transcription of DNA into RNA using the four ribonucleoside triphosphates as substrates. This chain is DNA-directed RNA polymerase subunit beta, found in Thermotoga petrophila (strain ATCC BAA-488 / DSM 13995 / JCM 10881 / RKU-1).